Reading from the N-terminus, the 148-residue chain is ATP synthase epsilon chain (148 aa).

Belongs to the ATPase epsilon chain family. As to quaternary structure, F-type ATPases have 2 components, CF(1) - the catalytic core - and CF(0) - the membrane proton channel. CF(1) has five subunits: alpha(3), beta(3), gamma(1), delta(1), epsilon(1). CF(0) has three main subunits: a, b and c.

The protein resides in the cell membrane. Its function is as follows. Produces ATP from ADP in the presence of a proton gradient across the membrane. The chain is ATP synthase epsilon chain from Streptococcus thermophilus (strain ATCC BAA-250 / LMG 18311).